Consider the following 436-residue polypeptide: Bifunctional protein GlmU (436 aa).

The interval 1 to 226 is pyrophosphorylase; it reads MNEISIIILA…ETNFMGINDK (226 aa). UDP-N-acetyl-alpha-D-glucosamine is bound by residues 9 to 12, Lys23, Gln75, and 82 to 83; these read LAAG and GT. Asp105 is a binding site for Mg(2+). UDP-N-acetyl-alpha-D-glucosamine contacts are provided by Gly138, Glu152, Asn167, and Asn224. Asn224 contacts Mg(2+). Residues 227–247 form a linker region; sequence FALSIAEEIMQNRIKENLMKN. Residues 248-436 form an N-acetyltransferase region; the sequence is GVIMSLPDTI…YKFFGKNDEK (189 aa). Residues Arg311 and Lys328 each coordinate UDP-N-acetyl-alpha-D-glucosamine. Catalysis depends on His339, which acts as the Proton acceptor. UDP-N-acetyl-alpha-D-glucosamine contacts are provided by Tyr342 and Asn353. Acetyl-CoA contacts are provided by residues 362-363, Ser381, Ala399, and Arg416; that span reads NY.

In the N-terminal section; belongs to the N-acetylglucosamine-1-phosphate uridyltransferase family. The protein in the C-terminal section; belongs to the transferase hexapeptide repeat family. In terms of assembly, homotrimer. Requires Mg(2+) as cofactor.

Its subcellular location is the cytoplasm. It carries out the reaction alpha-D-glucosamine 1-phosphate + acetyl-CoA = N-acetyl-alpha-D-glucosamine 1-phosphate + CoA + H(+). The enzyme catalyses N-acetyl-alpha-D-glucosamine 1-phosphate + UTP + H(+) = UDP-N-acetyl-alpha-D-glucosamine + diphosphate. Its pathway is nucleotide-sugar biosynthesis; UDP-N-acetyl-alpha-D-glucosamine biosynthesis; N-acetyl-alpha-D-glucosamine 1-phosphate from alpha-D-glucosamine 6-phosphate (route II): step 2/2. It participates in nucleotide-sugar biosynthesis; UDP-N-acetyl-alpha-D-glucosamine biosynthesis; UDP-N-acetyl-alpha-D-glucosamine from N-acetyl-alpha-D-glucosamine 1-phosphate: step 1/1. It functions in the pathway bacterial outer membrane biogenesis; LPS lipid A biosynthesis. Its function is as follows. Catalyzes the last two sequential reactions in the de novo biosynthetic pathway for UDP-N-acetylglucosamine (UDP-GlcNAc). The C-terminal domain catalyzes the transfer of acetyl group from acetyl coenzyme A to glucosamine-1-phosphate (GlcN-1-P) to produce N-acetylglucosamine-1-phosphate (GlcNAc-1-P), which is converted into UDP-GlcNAc by the transfer of uridine 5-monophosphate (from uridine 5-triphosphate), a reaction catalyzed by the N-terminal domain. This Campylobacter fetus subsp. fetus (strain 82-40) protein is Bifunctional protein GlmU.